The following is a 274-amino-acid chain: 2,3,4,5-tetrahydropyridine-2,6-dicarboxylate N-succinyltransferase (274 aa).

2 residues coordinate substrate: Arg-104 and Asp-141.

It belongs to the transferase hexapeptide repeat family. In terms of assembly, homotrimer.

It localises to the cytoplasm. The enzyme catalyses (S)-2,3,4,5-tetrahydrodipicolinate + succinyl-CoA + H2O = (S)-2-succinylamino-6-oxoheptanedioate + CoA. Its pathway is amino-acid biosynthesis; L-lysine biosynthesis via DAP pathway; LL-2,6-diaminopimelate from (S)-tetrahydrodipicolinate (succinylase route): step 1/3. The chain is 2,3,4,5-tetrahydropyridine-2,6-dicarboxylate N-succinyltransferase from Escherichia coli O6:H1 (strain CFT073 / ATCC 700928 / UPEC).